Here is a 491-residue protein sequence, read N- to C-terminus: Probable malate:quinone oxidoreductase (491 aa).

It belongs to the MQO family. The cofactor is FAD.

The enzyme catalyses (S)-malate + a quinone = a quinol + oxaloacetate. Its pathway is carbohydrate metabolism; tricarboxylic acid cycle; oxaloacetate from (S)-malate (quinone route): step 1/1. This Actinobacillus pleuropneumoniae serotype 7 (strain AP76) protein is Probable malate:quinone oxidoreductase.